Consider the following 113-residue polypeptide: Probable 4-amino-4-deoxy-L-arabinose-phosphoundecaprenol flippase subunit ArnE (113 aa).

3 consecutive transmembrane segments (helical) span residues 39–59, 62–82, and 91–111; these read IFWL…WLRL, ILPL…VTLI, and VNVK…LMSM. Positions 42-111 constitute an EamA domain; that stretch reads LITAIAMLGF…IMLGIVLMSM (70 aa).

It belongs to the ArnE family. In terms of assembly, heterodimer of ArnE and ArnF.

It localises to the cell inner membrane. It participates in bacterial outer membrane biogenesis; lipopolysaccharide biosynthesis. Translocates 4-amino-4-deoxy-L-arabinose-phosphoundecaprenol (alpha-L-Ara4N-phosphoundecaprenol) from the cytoplasmic to the periplasmic side of the inner membrane. In Proteus mirabilis (strain HI4320), this protein is Probable 4-amino-4-deoxy-L-arabinose-phosphoundecaprenol flippase subunit ArnE.